The following is a 61-amino-acid chain: Metallothionein-II, hippocampal (61 aa).

Met-1 carries the N-acetylmethionine modification. The segment at 1–29 is beta; sequence MDPNCSCATGGSCTCANSCTCKACKCASC. Cys-5, Cys-7, Cys-13, Cys-15, Cys-19, Cys-21, Cys-24, Cys-26, Cys-29, Cys-33, Cys-34, Cys-36, Cys-37, Cys-41, Cys-44, Cys-48, Cys-50, Cys-57, Cys-59, and Cys-60 together coordinate a divalent metal cation. An alpha region spans residues 30–61; that stretch reads KKSCCSCCPVGCAKCAQGCICKGASDKCSCCA.

It belongs to the metallothionein superfamily. Type 1 family.

Its function is as follows. Metallothioneins have a high content of cysteine residues that bind various heavy metals; these proteins are transcriptionally regulated by both heavy metals and glucocorticoids. This isoform may play a role in regulating the transport, accumulation, and compartmentation of zinc in the hippocampus. This chain is Metallothionein-II, hippocampal, found in Bos taurus (Bovine).